The primary structure comprises 300 residues: Pantoate kinase (300 aa).

The protein belongs to the GHMP kinase family. PoK subfamily. Homodimer.

It carries out the reaction (R)-pantoate + ATP = (R)-4-phosphopantoate + ADP + H(+). Its pathway is cofactor biosynthesis; coenzyme A biosynthesis. Moderately stimulated in the presence of potassium cations. Inhibited by increasing concentrations of pantoate. Activity is not affected by CoA/acetyl-CoA. Phosphorylates (R)-pantoate to form (R)-4-phosphopantoate in the CoA biosynthesis pathway. Displays broad nucleotide specificity and utilizes ATP, GTP, UTP, and CTP with comparable catalytic efficiencies. The sequence is that of Pantoate kinase from Thermococcus kodakarensis (strain ATCC BAA-918 / JCM 12380 / KOD1) (Pyrococcus kodakaraensis (strain KOD1)).